A 211-amino-acid polypeptide reads, in one-letter code: Thiamine-phosphate synthase (211 aa).

Residues Gln41–Lys45 and Asn73 contribute to the 4-amino-2-methyl-5-(diphosphooxymethyl)pyrimidine site. The Mg(2+) site is built by Asp74 and Asp93. Residue Thr112 coordinates 4-amino-2-methyl-5-(diphosphooxymethyl)pyrimidine. Ser139–Thr141 provides a ligand contact to 2-[(2R,5Z)-2-carboxy-4-methylthiazol-5(2H)-ylidene]ethyl phosphate. Lys142 contributes to the 4-amino-2-methyl-5-(diphosphooxymethyl)pyrimidine binding site. 2-[(2R,5Z)-2-carboxy-4-methylthiazol-5(2H)-ylidene]ethyl phosphate is bound by residues Gly169 and Val189 to Ser190.

It belongs to the thiamine-phosphate synthase family. Mg(2+) is required as a cofactor.

The enzyme catalyses 2-[(2R,5Z)-2-carboxy-4-methylthiazol-5(2H)-ylidene]ethyl phosphate + 4-amino-2-methyl-5-(diphosphooxymethyl)pyrimidine + 2 H(+) = thiamine phosphate + CO2 + diphosphate. The catalysed reaction is 2-(2-carboxy-4-methylthiazol-5-yl)ethyl phosphate + 4-amino-2-methyl-5-(diphosphooxymethyl)pyrimidine + 2 H(+) = thiamine phosphate + CO2 + diphosphate. It catalyses the reaction 4-methyl-5-(2-phosphooxyethyl)-thiazole + 4-amino-2-methyl-5-(diphosphooxymethyl)pyrimidine + H(+) = thiamine phosphate + diphosphate. The protein operates within cofactor biosynthesis; thiamine diphosphate biosynthesis; thiamine phosphate from 4-amino-2-methyl-5-diphosphomethylpyrimidine and 4-methyl-5-(2-phosphoethyl)-thiazole: step 1/1. In terms of biological role, condenses 4-methyl-5-(beta-hydroxyethyl)thiazole monophosphate (THZ-P) and 2-methyl-4-amino-5-hydroxymethyl pyrimidine pyrophosphate (HMP-PP) to form thiamine monophosphate (TMP). The chain is Thiamine-phosphate synthase from Thioalkalivibrio sulfidiphilus (strain HL-EbGR7).